Here is a 274-residue protein sequence, read N- to C-terminus: Actin-binding protein Smlt3054 (274 aa).

ANK repeat units follow at residues 192 to 221 and 225 to 254; these read SGNT…DVAA and HGWA…NPEQ. A disordered region spans residues 251–274; the sequence is NPEQPGWRGRTPTRMHRHEQTQAL.

Exists as a dimer as well as a higher order oligomer.

It is found in the secreted. It localises to the periplasm. Its function is as follows. Directly binds F-actin, which results in thickened and distorted F-actin fibers, and affects cellular F-actin localization. Thus, may be a host effector whose function is to disrupt host actin cytoskeletal structure, which may enhance invasion. This is Actin-binding protein Smlt3054 from Stenotrophomonas maltophilia (strain K279a).